A 395-amino-acid chain; its full sequence is Multidrug resistance protein MdtL (395 aa).

12 helical membrane-spanning segments follow: residues 4 to 24 (FLLC…MYLV), 42 to 62 (IAFS…GKIA), 69 to 89 (PVAI…SRAS), 93 to 113 (LFLS…VVAF), 131 to 151 (LLNG…HLIM), 158 to 178 (SLFY…LFIL), 217 to 237 (VSVI…VMGF), 247 to 267 (ALTA…LGLF), 271 to 291 (TLML…SLAH), 295 to 315 (VTLF…GVAM), 333 to 353 (LGIA…ILGI), and 358 to 378 (MLIG…FSVA).

Belongs to the major facilitator superfamily. DHA1 family. MdtL (TC 2.A.1.2.22) subfamily.

Its subcellular location is the cell inner membrane. This Salmonella agona (strain SL483) protein is Multidrug resistance protein MdtL.